The sequence spans 176 residues: Mediator of RNA polymerase II transcription subunit 11 (176 aa).

Residues 98–176 (SRVRELEETK…MGGDSSMSTN (79 aa)) form a disordered region. Basic and acidic residues predominate over residues 99 to 108 (RVRELEETKA). Low complexity predominate over residues 124 to 154 (HAAAQQQQQQQQQQQQQQQQMQQAAQQQQQQ).

It belongs to the Mediator complex subunit 11 family. In terms of assembly, component of the Mediator complex, which may include CDK8, MED4, MED6, MED11, MED14, MED17, MED18, MED20, MED21, MED22, MED27, MED28, MED30 and MED31.

Its subcellular location is the nucleus. Its function is as follows. Component of the Mediator complex, a coactivator involved in the regulated transcription of nearly all RNA polymerase II-dependent genes. Mediator functions as a bridge to convey information from gene-specific regulatory proteins to the basal RNA polymerase II transcription machinery. Mediator is recruited to promoters by direct interactions with regulatory proteins and serves as a scaffold for the assembly of a functional pre-initiation complex with RNA polymerase II and the general transcription factors. The protein is Mediator of RNA polymerase II transcription subunit 11 (MED11) of Drosophila melanogaster (Fruit fly).